The sequence spans 280 residues: Protease HtpX (280 aa).

The next 2 membrane-spanning stretches (helical) occupy residues 7–26 (TFIL…GLLG) and 30–49 (GMLV…YWYS). His129 provides a ligand contact to Zn(2+). The active site involves Glu130. His133 contacts Zn(2+). 2 helical membrane passes run 146–166 (ATIA…SMFG) and 178–198 (VVGM…QMAI). Glu203 serves as a coordination point for Zn(2+).

This sequence belongs to the peptidase M48B family. Zn(2+) is required as a cofactor.

The protein localises to the cell inner membrane. This Legionella pneumophila (strain Corby) protein is Protease HtpX.